Reading from the N-terminus, the 269-residue chain is 3-methyl-2-oxobutanoate hydroxymethyltransferase (269 aa).

The Mg(2+) site is built by aspartate 42 and aspartate 81. Residues 42–43 (DS), aspartate 81, and lysine 111 each bind 3-methyl-2-oxobutanoate. Glutamate 113 contributes to the Mg(2+) binding site. Glutamate 179 serves as the catalytic Proton acceptor. The tract at residues 250 to 269 (SGEFPRESHSHTEDELDDLY) is disordered. Residues 252–262 (EFPRESHSHTE) are compositionally biased toward basic and acidic residues.

This sequence belongs to the PanB family. Homodecamer; pentamer of dimers. The cofactor is Mg(2+).

It localises to the cytoplasm. The enzyme catalyses 3-methyl-2-oxobutanoate + (6R)-5,10-methylene-5,6,7,8-tetrahydrofolate + H2O = 2-dehydropantoate + (6S)-5,6,7,8-tetrahydrofolate. The protein operates within cofactor biosynthesis; coenzyme A biosynthesis. In terms of biological role, catalyzes the reversible reaction in which hydroxymethyl group from 5,10-methylenetetrahydrofolate is transferred onto alpha-ketoisovalerate to form ketopantoate. In Haloarcula marismortui (strain ATCC 43049 / DSM 3752 / JCM 8966 / VKM B-1809) (Halobacterium marismortui), this protein is 3-methyl-2-oxobutanoate hydroxymethyltransferase.